Reading from the N-terminus, the 156-residue chain is MIALIQRVSQARVTVDGRTTGEIGAGLLALVCAERGDTEAQAERLLAKLLSYRVFSDAEGRMNLPVQNMDGQGNAGGLLVVSQFTLAADTNSGTRPSFTPAAAPEDGRRLYDHFVTRARAAHPSVQTGEFGAMMQVSLTNDGPVTFWLRVPPAANA.

Positions 142–143 (GP) match the Gly-cisPro motif, important for rejection of L-amino acids motif.

The protein belongs to the DTD family. As to quaternary structure, homodimer.

The protein localises to the cytoplasm. The enzyme catalyses glycyl-tRNA(Ala) + H2O = tRNA(Ala) + glycine + H(+). It carries out the reaction a D-aminoacyl-tRNA + H2O = a tRNA + a D-alpha-amino acid + H(+). An aminoacyl-tRNA editing enzyme that deacylates mischarged D-aminoacyl-tRNAs. Also deacylates mischarged glycyl-tRNA(Ala), protecting cells against glycine mischarging by AlaRS. Acts via tRNA-based rather than protein-based catalysis; rejects L-amino acids rather than detecting D-amino acids in the active site. By recycling D-aminoacyl-tRNA to D-amino acids and free tRNA molecules, this enzyme counteracts the toxicity associated with the formation of D-aminoacyl-tRNA entities in vivo and helps enforce protein L-homochirality. This Cupriavidus metallidurans (strain ATCC 43123 / DSM 2839 / NBRC 102507 / CH34) (Ralstonia metallidurans) protein is D-aminoacyl-tRNA deacylase.